Here is a 280-residue protein sequence, read N- to C-terminus: Urease accessory protein UreD 1 (280 aa).

Belongs to the UreD family. UreD, UreF and UreG form a complex that acts as a GTP-hydrolysis-dependent molecular chaperone, activating the urease apoprotein by helping to assemble the nickel containing metallocenter of UreC. The UreE protein probably delivers the nickel.

Its subcellular location is the cytoplasm. In terms of biological role, required for maturation of urease via the functional incorporation of the urease nickel metallocenter. This chain is Urease accessory protein UreD 1, found in Brucella abortus biovar 1 (strain 9-941).